The chain runs to 55 residues: Variant surface glycoprotein ETAT 1.2 (55 aa).

N-linked (GlcNAc...) asparagine glycosylation occurs at asparagine 34. The GPI-anchor amidated asparagine moiety is linked to residue asparagine 38. Positions 39–55 (NSFAIKTSTLLLAVLLF) are cleaved as a propeptide — removed in mature form.

The protein resides in the cell membrane. VSG forms a coat on the surface of the parasite. The trypanosome evades the immune response of the host by expressing a series of antigenically distinct VSGs from an estimated 1000 VSG genes. The sequence is that of Variant surface glycoprotein ETAT 1.2 from Trypanosoma brucei rhodesiense.